The following is a 235-amino-acid chain: 2,3,4,5-tetrahydropyridine-2,6-dicarboxylate N-acetyltransferase (235 aa).

It belongs to the transferase hexapeptide repeat family. DapH subfamily.

It catalyses the reaction (S)-2,3,4,5-tetrahydrodipicolinate + acetyl-CoA + H2O = L-2-acetamido-6-oxoheptanedioate + CoA. It participates in amino-acid biosynthesis; L-lysine biosynthesis via DAP pathway; LL-2,6-diaminopimelate from (S)-tetrahydrodipicolinate (acetylase route): step 1/3. In terms of biological role, catalyzes the transfer of an acetyl group from acetyl-CoA to tetrahydrodipicolinate. The protein is 2,3,4,5-tetrahydropyridine-2,6-dicarboxylate N-acetyltransferase of Exiguobacterium sp. (strain ATCC BAA-1283 / AT1b).